A 722-amino-acid chain; its full sequence is MEKNGNNRKLRVCVATCNRADYSKLAPIMFGIKTEPAFFELDVVVLGSHLIDDYGNTYRMIEQDDFDINTRLHTIVRGEDEAAMVESVGLALVKLPDVLNRLKPDIMIVHGDRFDALALATSAALMNIRILHIEGGEVSGTIDDSIRHAITKLAHYHVCCTRSAEQHLISMCEDHDRILLAGCPSYDKLLSAKNKDYMSIIRMWLGDDVKCKDYIVALQHPVTTDIKHSIKMFELTLDALISFNKRTLVLFPNIDAGSKEMVRVMRKKGIEHHPNFRAVKHVPFDQFIQLVAHAGCMIGNSSCGVREVGAFGTPVINLGTRQIGRETGENVLHVRDADTQDKILQALHLQFGKQYPCSKIYGDGNAVPRILKFLKSIDLQEPLQKKFCFPPVKENISQDIDHILETLSALAVDLGGTNLRVAIVSMKGEIVKKYTQFNPKTYEERISLILQMCVEAAAEAVKLNCRILGVGISTGGRVNPQEGVVLHSTKLIQEWNSVDLRTPLSDTLHLPVWVDNDGNCAAMAERKFGQGKGQENFVTLITGTGIGGGIIHQHELIHGSSFCAAELGHLVVSLDGPDCSCGSHGCIEAYASGMALQREAKKLHDEDLLLVEGMSVPKDEAVGALHLIQAAKLGNVKAQSILRTAGTALGLGVVNILHTMNPSLVILSGVLASHYIHIVKDVIRQQALSSVQDVDVVVSDLVDPALLGAASMVLDYTTRRIH.

5 residues coordinate UDP: Arg19, Ser23, Arg113, His220, and Asn253. 4 residues coordinate CMP-N-acetyl-beta-neuraminate: Lys259, Glu271, Lys280, and His281. Positions 282, 301, 302, 307, and 321 each coordinate UDP. An N-acetylmannosamine kinase region spans residues 406–722 (TLSALAVDLG…VLDYTTRRIH (317 aa)). Asp413 contacts Mg(2+). Gly416 lines the an N-acyl-D-mannosamine 6-phosphate pocket. The ADP site is built by Thr417, Asn418, and Arg420. Gly476, Arg477, Thr489, Asn516, Asp517, and Gly545 together coordinate an N-acyl-D-mannosamine 6-phosphate. Gly476, Arg477, Thr489, Asn516, and Asp517 together coordinate an N-acyl-D-mannosamine. Residue Asp517 is part of the active site. Glu566 and His569 together coordinate an N-acyl-D-mannosamine. His569 contributes to the an N-acyl-D-mannosamine 6-phosphate binding site. Zn(2+) contacts are provided by His569, Cys579, Cys581, and Cys586. Glu588 contributes to the an N-acyl-D-mannosamine 6-phosphate binding site. Glu588 is a binding site for an N-acyl-D-mannosamine.

This sequence in the N-terminal section; belongs to the UDP-N-acetylglucosamine 2-epimerase family. In the C-terminal section; belongs to the ROK (NagC/XylR) family. As to quaternary structure, homodimer. Homotetramer. Homohexamer. The hexameric form exhibits both enzyme activities, whereas the dimeric form only catalyzes the phosphorylation of N-acyl-D-mannosamine. In terms of processing, phosphorylated. Phosphorylation by PKC activates the UDP-N-acetylglucosamine 2-epimerase activity. Widely expressed. Highest expression in liver. Also found at high levels in lung, brain and kidney.

The protein localises to the cytoplasm. It is found in the cytosol. The catalysed reaction is UDP-N-acetyl-alpha-D-glucosamine + H2O = aldehydo-N-acetyl-D-mannosamine + UDP + H(+). The enzyme catalyses an N-acyl-D-mannosamine + ATP = an N-acyl-D-mannosamine 6-phosphate + ADP + H(+). It functions in the pathway amino-sugar metabolism; N-acetylneuraminate biosynthesis. With respect to regulation, the UDP-N-acetylglucosamine 2-epimerase activity, in contrast to the N-acetylmannosamine kinase activity, exhibits allosteric regulation by cytidine monophosphate-N-acetylneuraminic acid (CMP-Neu5Ac), the end product of neuraminic acid biosynthesis. Moreover, the activity is contingent upon the oligomeric state of the enzyme. The monomeric form is inactive, while the dimeric form selectively catalyzes the phosphorylation of N-acetylmannosamine. The hexameric form, on the other hand, demonstrates full proficiency in both enzyme activities. Furthermore, the UDP-N-acetylglucosamine 2-epimerase activity is increased by PKC-mediated phosphorylation. Its function is as follows. Bifunctional enzyme that possesses both UDP-N-acetylglucosamine 2-epimerase and N-acetylmannosamine kinase activities, and serves as the initiator of the biosynthetic pathway leading to the production of N-acetylneuraminic acid (NeuAc), a critical precursor in the synthesis of sialic acids. By catalyzing this pivotal and rate-limiting step in sialic acid biosynthesis, this enzyme assumes a pivotal role in governing the regulation of cell surface sialylation, playing a role in embryonic angiogenesis. Sialic acids represent a category of negatively charged sugars that reside on the surface of cells as terminal components of glycoconjugates and mediate important functions in various cellular processes, including cell adhesion, signal transduction, and cellular recognition. This is Bifunctional UDP-N-acetylglucosamine 2-epimerase/N-acetylmannosamine kinase from Mus musculus (Mouse).